The following is a 229-amino-acid chain: 7-cyano-7-deazaguanine synthase (229 aa).

Leu7 to Leu17 contributes to the ATP binding site. Zn(2+)-binding residues include Cys191, Cys204, Cys207, and Cys210.

The protein belongs to the QueC family. Requires Zn(2+) as cofactor.

The enzyme catalyses 7-carboxy-7-deazaguanine + NH4(+) + ATP = 7-cyano-7-deazaguanine + ADP + phosphate + H2O + H(+). It functions in the pathway purine metabolism; 7-cyano-7-deazaguanine biosynthesis. In terms of biological role, catalyzes the ATP-dependent conversion of 7-carboxy-7-deazaguanine (CDG) to 7-cyano-7-deazaguanine (preQ(0)). The sequence is that of 7-cyano-7-deazaguanine synthase from Cyanothece sp. (strain PCC 7425 / ATCC 29141).